We begin with the raw amino-acid sequence, 895 residues long: Putative endoplasmic reticulum metallopeptidase 1-B (895 aa).

A disordered region spans residues 1-27 (MSTGIRRRHADEKKNILEKESLQNDET). Over 1–39 (MSTGIRRRHADEKKNILEKESLQNDETQREMEKDISLLR) the chain is Cytoplasmic. A compositionally biased stretch (basic and acidic residues) spans 9–27 (HADEKKNILEKESLQNDET). A helical transmembrane segment spans residues 40–60 (PAHWNFIGLFFLVLIIGTTFL). Residues 61–374 (HKCLPEPKDP…KPAEYADRKT (314 aa)) are Lumenal-facing. The N-linked (GlcNAc...) asparagine glycan is linked to Asn156. Residues His180 and Asp192 each contribute to the Zn(2+) site. The active-site Proton acceptor is the Glu226. Residues Glu227, Glu253, and His329 each contribute to the Zn(2+) site. Residues 375-395 (VFFDFLGLFVIIYPLSIAHLV) form a helical membrane-spanning segment. Residues 396 to 424 (NMLTICTVIALMSHRFYSKTFITFLALRD) are Cytoplasmic-facing. A helical transmembrane segment spans residues 425-445 (YVLTILTIALVLKAMTFMSLF). Over 446 to 457 (TYGALRWYTRHW) the chain is Lumenal. The helical transmembrane segment at 458 to 478 (LALVAYGLPSVWAGISVQGLL) threads the bilayer. The Cytoplasmic segment spans residues 479 to 489 (TARLAPKAREE). Residues 490-512 (YGSTLELIHLTLISGILLAFTYY) form a helical membrane-spanning segment. Over 513–515 (DIA) the chain is Lumenal. The chain crosses the membrane as a helical span at residues 516–538 (SGFLFALLLVPAIKSIITYFGAW). Over 539–553 (PTCPTFNTILTLILS) the chain is Cytoplasmic. The chain crosses the membrane as a helical span at residues 554 to 574 (FPGCAMAIYTTEMLLSIFIPI). The Lumenal portion of the chain corresponds to 575–584 (MGRSSYNPEP). A helical transmembrane segment spans residues 585–605 (AVSFFVAFSAGCIVLSLGGLV). Residues 606–619 (AKSRNSRSSNEAGL) are Cytoplasmic-facing. The chain crosses the membrane as a helical span at residues 620–640 (LELIYNILGVLLVTLTILYVF). Residues 641–895 (SSFWPSPYRF…WNVDQVYKYF (255 aa)) lie on the Lumenal side of the membrane. Residues Asn679 and Asn796 are each glycosylated (N-linked (GlcNAc...) asparagine).

Belongs to the peptidase M28 family. Zn(2+) is required as a cofactor.

Its subcellular location is the endoplasmic reticulum membrane. This is Putative endoplasmic reticulum metallopeptidase 1-B from Caenorhabditis elegans.